Consider the following 457-residue polypeptide: G-protein coupled receptor 135 (457 aa).

The segment at 1–26 (MEEQARPPGRPAASATLQGSAHPGGA) is disordered. The Extracellular portion of the chain corresponds to 1–64 (MEEQARPPGR…EAAGSRGPAP (64 aa)). An N-linked (GlcNAc...) asparagine glycan is attached at N47. The chain crosses the membrane as a helical span at residues 65 to 85 (LLWHGAAVAAQALVLLLIFLL). The Cytoplasmic portion of the chain corresponds to 86 to 109 (SSLGNCAVMGVIVKHRQLRTVTNA). The chain crosses the membrane as a helical span at residues 110–130 (FILSLSLSDLLTALLCLPAAF). The Extracellular portion of the chain corresponds to 131 to 156 (LDLFAPPGDSGPWRSFCAASRFFSSC). A helical transmembrane segment spans residues 157–177 (FGIVSTFSVALISLDRYCAIV). The Cytoplasmic segment spans residues 178 to 189 (RPPRDKLGRRRA). Residues 190 to 210 (LQLLAGAWLAALGFSLPWDLL) form a helical membrane-spanning segment. Over 211-235 (RAPREPPAPQSFHRCLYRTSPDPAQ) the chain is Extracellular. Residues 236-256 (LGVAYSVGLVVACYLLPFLLM) traverse the membrane as a helical segment. Over 257-295 (CFCRYHICKTVRLSDVRVRPMTTYARVLRFFSEVRTATT) the chain is Cytoplasmic. The helical transmembrane segment at 296–316 (VLIMIIFVMCCWGPYCFLVLL) threads the bilayer. Residues 317-329 (AATRQGQATQAPS) lie on the Extracellular side of the membrane. A helical membrane pass occupies residues 330-350 (LLNVAAVWLTWANGAINPVIY). Residues 351–457 (AIRNPNISML…HNSETRDSSI (107 aa)) lie on the Cytoplasmic side of the membrane.

This sequence belongs to the G-protein coupled receptor 1 family. Interacts with MTNR1B. Interacts with ARRB1 and ARRB2 in a spontaneous and agonist-independent manner; leading to the internalization of GPR135 in the endosomal compartment.

It localises to the cell membrane. The protein resides in the endosome membrane. Its function is as follows. Orphan receptor. Has spontaneous activity for beta-arrestin recruitment. Shows a reciprocal regulatory interaction with the melatonin receptor MTNR1B most likely through receptor heteromerization. This chain is G-protein coupled receptor 135 (Gpr135), found in Mus musculus (Mouse).